The primary structure comprises 127 residues: Large ribosomal subunit protein bL21c (127 aa).

It belongs to the bacterial ribosomal protein bL21 family. In terms of assembly, part of the 50S ribosomal subunit.

It localises to the plastid. It is found in the chloroplast. Its function is as follows. This protein binds to 23S rRNA. This chain is Large ribosomal subunit protein bL21c, found in Adiantum capillus-veneris (Maidenhair fern).